Reading from the N-terminus, the 48-residue chain is Small polypeptide DEVIL 14 (48 aa).

A helical membrane pass occupies residues 4–23 (TVVLRCCTSVTKVRTWKRCS). Residues 17-48 (RTWKRCSKQIKEQRARLYIIWKCAVFLLSSHD) are required for DVL/RTFL small polypeptide activity.

Belongs to the DVL/RTFL small polypeptides family.

The protein resides in the cell membrane. Its function is as follows. Small polypeptide acting as a regulatory molecule which coordinates cellular responses required for differentiation, growth and development, probably by restricting polar cell proliferation in lateral organs and coordinating socket cell recruitment and differentiation at trichome sites. In Arabidopsis thaliana (Mouse-ear cress), this protein is Small polypeptide DEVIL 14.